A 479-amino-acid polypeptide reads, in one-letter code: UDP-glucose flavonoid 3-O-glucosyltransferase 6 (479 aa).

Histidine 17 serves as the catalytic Proton acceptor. Histidine 17 contributes to the an anthocyanidin binding site. Aspartate 121 acts as the Charge relay in catalysis. Residues threonine 143, alanine 354, glutamine 356, histidine 371, tryptophan 374, asparagine 375, serine 376, and glutamate 379 each contribute to the UDP-alpha-D-glucose site. An an anthocyanidin-binding site is contributed by alanine 394. 2 residues coordinate UDP-alpha-D-glucose: glutamate 395 and glutamine 396. Residues 454 to 479 are disordered; it reads MSRKALEEDGSSYSSLGRFLDQIQTS.

Belongs to the UDP-glycosyltransferase family. As to expression, strongly expressed in achenes, with lower expression levels detected in receptacles.

It carries out the reaction a flavonol + UDP-alpha-D-glucose = a flavonol 3-O-beta-D-glucoside + UDP + H(+). Its function is as follows. Broad spectrum multifunctional glucosyltransferase. Catalyzes the formation of flavonol 3-O-glucosides during fruit ripening. Accepted substrates include several flavonoids, hydroxycoumarins and beta-naphthols. Uses UDP-Glc as a sugar donor, but not UDP-Gal or UDP-GlcUA. May also be involved in detoxification of xenobiotics. The sequence is that of UDP-glucose flavonoid 3-O-glucosyltransferase 6 from Fragaria ananassa (Strawberry).